Reading from the N-terminus, the 368-residue chain is UDP-N-acetylenolpyruvoylglucosamine reductase (368 aa).

In terms of domain architecture, FAD-binding PCMH-type spans 32 to 199 (IGGKPRSAVR…LAIELQLLTD (168 aa)). R177 is a catalytic residue. The Proton donor role is filled by S257. The active site involves E358.

This sequence belongs to the MurB family. The cofactor is FAD.

Its subcellular location is the cytoplasm. The catalysed reaction is UDP-N-acetyl-alpha-D-muramate + NADP(+) = UDP-N-acetyl-3-O-(1-carboxyvinyl)-alpha-D-glucosamine + NADPH + H(+). Its pathway is cell wall biogenesis; peptidoglycan biosynthesis. Cell wall formation. This chain is UDP-N-acetylenolpyruvoylglucosamine reductase, found in Corynebacterium glutamicum (strain R).